Here is a 300-residue protein sequence, read N- to C-terminus: tRNA dimethylallyltransferase 1 (300 aa).

Gly-13–Thr-20 lines the ATP pocket. Residue Thr-15–Thr-20 participates in substrate binding. The interaction with substrate tRNA stretch occupies residues Asp-38–Gln-41.

The protein belongs to the IPP transferase family. In terms of assembly, monomer. It depends on Mg(2+) as a cofactor.

The catalysed reaction is adenosine(37) in tRNA + dimethylallyl diphosphate = N(6)-dimethylallyladenosine(37) in tRNA + diphosphate. Catalyzes the transfer of a dimethylallyl group onto the adenine at position 37 in tRNAs that read codons beginning with uridine, leading to the formation of N6-(dimethylallyl)adenosine (i(6)A). This is tRNA dimethylallyltransferase 1 from Porphyromonas gingivalis (strain ATCC BAA-308 / W83).